Consider the following 230-residue polypeptide: Ribonuclease 3 (230 aa).

Positions 10-133 (DPRLQSRIGY…IIGAIYVDSN (124 aa)) constitute an RNase III domain. Mg(2+) is bound at residue Glu-46. Residue Asp-50 is part of the active site. Mg(2+) is bound by residues Asp-119 and Glu-122. Glu-122 is a catalytic residue. Residues 161–230 (DPKSRLQEYL…AAEILKLLEQ (70 aa)) form the DRBM domain.

Belongs to the ribonuclease III family. In terms of assembly, homodimer. The cofactor is Mg(2+).

Its subcellular location is the cytoplasm. The catalysed reaction is Endonucleolytic cleavage to 5'-phosphomonoester.. In terms of biological role, digests double-stranded RNA. Involved in the processing of primary rRNA transcript to yield the immediate precursors to the large and small rRNAs (23S and 16S). Processes some mRNAs, and tRNAs when they are encoded in the rRNA operon. Processes pre-crRNA and tracrRNA of type II CRISPR loci if present in the organism. This is Ribonuclease 3 from Acinetobacter baylyi (strain ATCC 33305 / BD413 / ADP1).